Consider the following 482-residue polypeptide: DnaJ protein P58IPK homolog (482 aa).

The N-terminal stretch at 1–42 (MDLFRVWSGMDFLAWRGMAYTLLLLNFVFACQLLLLQPLVSA) is a signal peptide. TPR repeat units lie at residues 50 to 83 (AAEL…DPAL), 85 to 117 (EAYF…KSGD), 130 to 164 (AKSA…SPAC), 166 to 198 (KAKL…DENN), 199 to 232 (LEAL…DPEH), 245 to 278 (LLKK…DPEH), 283 to 316 (VHLY…DAEL), and 318 to 350 (EALH…SQDM). The region spanning 370–436 (DWYKILGISR…DKRARFDRGE (67 aa)) is the J domain.

As to quaternary structure, interacts with the helicase domain of the tobamovirus (TMV) and the tobacco etch virus (TEV) replicases. As to expression, expressed in flower buds and flowers.

It is found in the endoplasmic reticulum lumen. Its function is as follows. Plays an important positive role in viral symptom development and is required for viral multiplication and pathogenesis. The chain is DnaJ protein P58IPK homolog (P58IPK) from Arabidopsis thaliana (Mouse-ear cress).